Reading from the N-terminus, the 164-residue chain is Putative 4-hydroxy-4-methyl-2-oxoglutarate aldolase (164 aa).

Substrate is bound by residues 80–83 (GGNL) and Arg-102. Asp-103 is an a divalent metal cation binding site.

It belongs to the class II aldolase/RraA-like family. As to quaternary structure, homotrimer. A divalent metal cation is required as a cofactor.

The enzyme catalyses 4-hydroxy-4-methyl-2-oxoglutarate = 2 pyruvate. The catalysed reaction is oxaloacetate + H(+) = pyruvate + CO2. Functionally, catalyzes the aldol cleavage of 4-hydroxy-4-methyl-2-oxoglutarate (HMG) into 2 molecules of pyruvate. Also contains a secondary oxaloacetate (OAA) decarboxylase activity due to the common pyruvate enolate transition state formed following C-C bond cleavage in the retro-aldol and decarboxylation reactions. The polypeptide is Putative 4-hydroxy-4-methyl-2-oxoglutarate aldolase (Paraburkholderia phymatum (strain DSM 17167 / CIP 108236 / LMG 21445 / STM815) (Burkholderia phymatum)).